The chain runs to 725 residues: Polyribonucleotide nucleotidyltransferase (725 aa).

Positions 506 and 512 each coordinate Mg(2+). Residues 571–631 (PLIEQFAIDP…QNIIDACEHI (61 aa)) enclose the KH domain. The S1 motif domain occupies 657 to 724 (DEVVIGKVER…KKDRIELSSA (68 aa)).

The protein belongs to the polyribonucleotide nucleotidyltransferase family. The cofactor is Mg(2+).

Its subcellular location is the cytoplasm. The catalysed reaction is RNA(n+1) + phosphate = RNA(n) + a ribonucleoside 5'-diphosphate. Its function is as follows. Involved in mRNA degradation. Catalyzes the phosphorolysis of single-stranded polyribonucleotides processively in the 3'- to 5'-direction. The polypeptide is Polyribonucleotide nucleotidyltransferase (Aliarcobacter butzleri (strain RM4018) (Arcobacter butzleri)).